Here is a 107-residue protein sequence, read N- to C-terminus: Auxin-responsive protein SAUR50 (107 aa).

It belongs to the ARG7 family. As to quaternary structure, interacts with BZR1. In terms of tissue distribution, expressed in cotyledons, leaves, flowers and siliques.

The protein localises to the cell membrane. In terms of biological role, provide a mechanistic link between auxin and plasma membrane H(+)-ATPases (PM H(+)-ATPases, e.g. AHA1 and AHA2), and triggers PM H(+)-ATPases activity by promoting phosphorylation of their C-terminal autoinhibitory domain as a result of PP2C-D subfamily of type 2C phosphatases inhibition, thus leading to the acidification of the apoplast and the facilitation of solutes and water uptake to drive cell expansion. Triggers plant growth probably by promoting cell elongation. Regulates branch angles and bending. Effector of hormonal and environmental signals in plant growth. In Arabidopsis thaliana (Mouse-ear cress), this protein is Auxin-responsive protein SAUR50.